Consider the following 384-residue polypeptide: Na(+)/H(+) antiporter NhaA (384 aa).

11 helical membrane passes run 7-27, 58-78, 94-114, 124-144, 153-173, 179-199, 204-224, 256-276, 285-305, 325-345, and 357-377; these read FYNL…LAII, LLLW…GLEI, LVPA…FIFF, GWAI…SLLG, ILLT…IALF, SLLS…LNYF, ISVF…SGVH, VVFL…FVGL, VVLG…FLSL, VYGI…IGSL, and MVKI…FLVL.

This sequence belongs to the NhaA Na(+)/H(+) (TC 2.A.33) antiporter family.

It is found in the cell inner membrane. It carries out the reaction Na(+)(in) + 2 H(+)(out) = Na(+)(out) + 2 H(+)(in). Functionally, na(+)/H(+) antiporter that extrudes sodium in exchange for external protons. This chain is Na(+)/H(+) antiporter NhaA, found in Legionella pneumophila (strain Corby).